A 35-amino-acid chain; its full sequence is Malate dehydrogenase, mitochondrial (35 aa).

Asparagine 7 contributes to the NAD(+) binding site. Position 23 (arginine 23) interacts with substrate.

This sequence belongs to the LDH/MDH superfamily. MDH type 1 family. In terms of assembly, homodimer.

It is found in the mitochondrion matrix. It catalyses the reaction (S)-malate + NAD(+) = oxaloacetate + NADH + H(+). This Capsicum annuum var. annuum (Red pepper) protein is Malate dehydrogenase, mitochondrial.